Here is a 267-residue protein sequence, read N- to C-terminus: NAD kinase 2 (267 aa).

Residue Asp52 is the Proton acceptor of the active site. Residues Asp52–Gly53, Asn124–Glu125, Arg151, Asp153, Thr164–Ser169, and Ala188 contribute to the NAD(+) site.

This sequence belongs to the NAD kinase family. The cofactor is a divalent metal cation.

The protein localises to the cytoplasm. It carries out the reaction NAD(+) + ATP = ADP + NADP(+) + H(+). In terms of biological role, involved in the regulation of the intracellular balance of NAD and NADP, and is a key enzyme in the biosynthesis of NADP. Catalyzes specifically the phosphorylation on 2'-hydroxyl of the adenosine moiety of NAD to yield NADP. The polypeptide is NAD kinase 2 (Bacillus subtilis (strain 168)).